A 777-amino-acid chain; its full sequence is Proton-coupled zinc antiporter SLC30A5 (777 aa).

The Cytoplasmic segment spans residues 1 to 28 (MEEKYSSNVMSSGRLGPVDAPESRLTRY). Residues 29 to 49 (IVLLCFTKFLKALGIFESYDL) form a helical membrane-spanning segment. Residues 50–52 (LKV) are Lumenal-facing. A helical transmembrane segment spans residues 53–73 (VHIVQFIFILKLGSTCFMVLF). The Cytoplasmic portion of the chain corresponds to 74–94 (QKPFSSGKSITKRQWVSIVKH). The chain crosses the membrane as a helical span at residues 95–115 (AFVSCIISLLWFFGLTLCGPL). Residues 116 to 117 (RT) lie on the Lumenal side of the membrane. The helical transmembrane segment at 118 to 138 (LLLFEHSDIVVISLLTVLFTG) threads the bilayer. Topologically, residues 139–148 (SGGGPSKTRG) are cytoplasmic. The helical transmembrane segment at 149-169 (AAFFIIAVICLLLFDNDDLMA) threads the bilayer. The Lumenal segment spans residues 170–189 (KIAEHPEGHHDSALTHFLYR). The helical transmembrane segment at 190–210 (AFFLLGVADHKGGVLLLVLAL) threads the bilayer. The Cytoplasmic portion of the chain corresponds to 211–234 (CFNVGFHTASRKLSLDIGGAKRLQ). A helical membrane pass occupies residues 235–255 (ALSHLVSVIILSPWVIILSAT). The Lumenal portion of the chain corresponds to 256–263 (TESKIESW). A helical transmembrane segment spans residues 264–284 (SALIMPFMTVIFSVMIMDFYV). The Cytoplasmic segment spans residues 285 to 299 (ESVCSVKMEPSKCAR). A helical transmembrane segment spans residues 300–320 (YGSFLIFASALLLGNFWTHPI). The Lumenal portion of the chain corresponds to 321 to 338 (TDQLRAMNKPAHQLHTEH). A helical transmembrane segment spans residues 339-359 (VLSGGVVVSAIFFILSAQILA). Residues 360–414 (SSSRKGQRGTLVGYSPEGTPLYNFMGDALHNTSPSMPRFLKDSLKQILEEYDSRQ) are Cytoplasmic-facing. A helical membrane pass occupies residues 415-435 (IFYFLCLNLAFTFVEIFYGVW). Topologically, residues 436 to 444 (TNSLGLLSD) are lumenal. The chain crosses the membrane as a helical span at residues 445 to 465 (GFHMLFDCSALVMGLIAALMT). 2 residues coordinate Zn(2+): H447 and D451. Topologically, residues 466–484 (RWKATRIFSYGYGRVEILS) are cytoplasmic. A helical membrane pass occupies residues 485–505 (GFINGLFLVVIAFFVFIEAVA). The Lumenal segment spans residues 506–516 (RIYDPPDINTD). A helical transmembrane segment spans residues 517-537 (MLTPVSVGGLIVNLVGICAFS). The tract at residues 538–586 (HAHSHGAARGGCPSHDHGHSHHGHGHSHGHNHGHSHSDHGHNHGHTHNH) is his-rich loop; required for zinc transport. The Cytoplasmic portion of the chain corresponds to 538 to 604 (HAHSHGAARG…VGMNANMRGV (67 aa)). Residues 547–593 (GGCPSHDHGHSHHGHGHSHGHNHGHSHSDHGHNHGHTHNHGHSHGSA) are disordered. Composition is skewed to basic residues over residues 555–571 (GHSHHGHGHSHGHNHGH) and 579–589 (NHGHTHNHGHS). A helical transmembrane segment spans residues 605–625 (FSHVLADTLGSVGVIVSTILI). Zn(2+) contacts are provided by H607 and D611. The Lumenal segment spans residues 626 to 629 (RQFG). The chain crosses the membrane as a helical span at residues 630–650 (WLIADPLCSLFIAVLIFGSVL). Over 651 to 777 (PLLKDACQVI…KYYKDGTYIM (127 aa)) the chain is Cytoplasmic.

The protein belongs to the cation diffusion facilitator (CDF) transporter (TC 2.A.4) family. SLC30A subfamily. In terms of assembly, heterodimer with SLC30A6/ZNT6; form a functional zinc ion transmembrane transporter.

The protein localises to the golgi apparatus. Its subcellular location is the golgi stack membrane. It is found in the cytoplasmic vesicle. It localises to the COPII-coated vesicle membrane. The protein resides in the secretory vesicle membrane. The protein localises to the trans-Golgi network membrane. The enzyme catalyses Zn(2+)(in) + 2 H(+)(out) = Zn(2+)(out) + 2 H(+)(in). Functionally, together with SLC30A6 forms a functional proton-coupled zinc ion antiporter mediating zinc entry into the lumen of organelles along the secretory pathway. By contributing to zinc ion homeostasis within the early secretory pathway, regulates the activation and folding of enzymes like alkaline phosphatases and enzymes involved in phosphatidylinositol glycan anchor biosynthesis. The polypeptide is Proton-coupled zinc antiporter SLC30A5 (slc30a5) (Xenopus tropicalis (Western clawed frog)).